The sequence spans 487 residues: Glutamyl-tRNA(Gln) amidotransferase subunit A (487 aa).

Residues Lys80 and Ser155 each act as charge relay system in the active site. The active-site Acyl-ester intermediate is Ser179.

The protein belongs to the amidase family. GatA subfamily. In terms of assembly, heterotrimer of A, B and C subunits.

The catalysed reaction is L-glutamyl-tRNA(Gln) + L-glutamine + ATP + H2O = L-glutaminyl-tRNA(Gln) + L-glutamate + ADP + phosphate + H(+). Its function is as follows. Allows the formation of correctly charged Gln-tRNA(Gln) through the transamidation of misacylated Glu-tRNA(Gln) in organisms which lack glutaminyl-tRNA synthetase. The reaction takes place in the presence of glutamine and ATP through an activated gamma-phospho-Glu-tRNA(Gln). This chain is Glutamyl-tRNA(Gln) amidotransferase subunit A, found in Leptospira interrogans serogroup Icterohaemorrhagiae serovar copenhageni (strain Fiocruz L1-130).